The primary structure comprises 152 residues: 6,7-dimethyl-8-ribityllumazine synthase (152 aa).

5-amino-6-(D-ribitylamino)uracil-binding positions include Phe22, 54–56, and 78–80; these read AFE and AVI. Position 83 to 84 (83 to 84) interacts with (2S)-2-hydroxy-3-oxobutyl phosphate; that stretch reads ET. His86 functions as the Proton donor in the catalytic mechanism. 5-amino-6-(D-ribitylamino)uracil is bound at residue Phe111. Arg125 is a binding site for (2S)-2-hydroxy-3-oxobutyl phosphate.

The protein belongs to the DMRL synthase family.

The catalysed reaction is (2S)-2-hydroxy-3-oxobutyl phosphate + 5-amino-6-(D-ribitylamino)uracil = 6,7-dimethyl-8-(1-D-ribityl)lumazine + phosphate + 2 H2O + H(+). The protein operates within cofactor biosynthesis; riboflavin biosynthesis; riboflavin from 2-hydroxy-3-oxobutyl phosphate and 5-amino-6-(D-ribitylamino)uracil: step 1/2. Functionally, catalyzes the formation of 6,7-dimethyl-8-ribityllumazine by condensation of 5-amino-6-(D-ribitylamino)uracil with 3,4-dihydroxy-2-butanone 4-phosphate. This is the penultimate step in the biosynthesis of riboflavin. The polypeptide is 6,7-dimethyl-8-ribityllumazine synthase (Limosilactobacillus reuteri (strain DSM 20016) (Lactobacillus reuteri)).